Consider the following 130-residue polypeptide: Type VII secretion system extracellular protein C (130 aa).

It belongs to the EsxC family. In terms of assembly, forms both homodimers and heterodimers with EsxA. Homodimerization is calcium-dependent.

It localises to the secreted. This chain is Type VII secretion system extracellular protein C, found in Staphylococcus aureus (strain USA300).